Here is a 233-residue protein sequence, read N- to C-terminus: Ribonuclease HII (233 aa).

The RNase H type-2 domain maps to glutamine 26–glutamate 215. The a divalent metal cation site is built by aspartate 32, glutamate 33, and aspartate 124. The disordered stretch occupies residues glycine 211 to glycine 233.

It belongs to the RNase HII family. Mn(2+) serves as cofactor. Requires Mg(2+) as cofactor.

Its subcellular location is the cytoplasm. The catalysed reaction is Endonucleolytic cleavage to 5'-phosphomonoester.. In terms of biological role, endonuclease that specifically degrades the RNA of RNA-DNA hybrids. The protein is Ribonuclease HII of Syntrophobacter fumaroxidans (strain DSM 10017 / MPOB).